The following is a 318-amino-acid chain: L-lactate dehydrogenase (318 aa).

Residues Val18, Asp39, Lys44, Tyr69, and 83–84 (GA) each bind NAD(+). 2 residues coordinate substrate: Gln86 and Arg92. NAD(+)-binding positions include Ser105, 122–124 (VSN), and Ser147. 124 to 127 (NPVD) contacts substrate. Residue 152-155 (DTSR) participates in substrate binding. Residue His179 is the Proton acceptor of the active site. At Tyr225 the chain carries Phosphotyrosine. Thr234 lines the substrate pocket.

This sequence belongs to the LDH/MDH superfamily. LDH family. As to quaternary structure, homotetramer.

The protein localises to the cytoplasm. The enzyme catalyses (S)-lactate + NAD(+) = pyruvate + NADH + H(+). Its pathway is fermentation; pyruvate fermentation to lactate; (S)-lactate from pyruvate: step 1/1. Catalyzes the conversion of lactate to pyruvate. This Clostridium botulinum (strain Langeland / NCTC 10281 / Type F) protein is L-lactate dehydrogenase.